The primary structure comprises 676 residues: Transketolase 7 (676 aa).

Residue His-36 coordinates substrate. Thiamine diphosphate contacts are provided by residues His-76 and 125–127; that span reads GPL. Asp-166 lines the Mg(2+) pocket. The thiamine diphosphate site is built by Gly-167 and Asn-196. Residues Asn-196 and Ile-198 each contribute to the Mg(2+) site. His-273, Arg-367, and Ser-394 together coordinate substrate. Position 273 (His-273) interacts with thiamine diphosphate. 2 residues coordinate thiamine diphosphate: Glu-421 and Phe-448. Glu-421 functions as the Proton donor in the catalytic mechanism. Positions 472, 480, and 531 each coordinate substrate.

It belongs to the transketolase family. In terms of assembly, homodimer. Requires Mg(2+) as cofactor. It depends on Ca(2+) as a cofactor. Mn(2+) is required as a cofactor. Co(2+) serves as cofactor. The cofactor is thiamine diphosphate. In terms of tissue distribution, leaves and roots.

It catalyses the reaction D-sedoheptulose 7-phosphate + D-glyceraldehyde 3-phosphate = aldehydo-D-ribose 5-phosphate + D-xylulose 5-phosphate. Could be involved in the conversion of sugars, which are a major phenomenon in the rehydration process. Its function is as follows. Catalyzes the transfer of a two-carbon ketol group from a ketose donor to an aldose acceptor, via a covalent intermediate with the cofactor thiamine pyrophosphate. The chain is Transketolase 7 (TKT7) from Craterostigma plantagineum (Blue gem).